We begin with the raw amino-acid sequence, 85 residues long: Elongation factor 1-beta (85 aa).

The protein belongs to the EF-1-beta/EF-1-delta family.

Promotes the exchange of GDP for GTP in EF-1-alpha/GDP, thus allowing the regeneration of EF-1-alpha/GTP that could then be used to form the ternary complex EF-1-alpha/GTP/AAtRNA. The chain is Elongation factor 1-beta from Methanospirillum hungatei JF-1 (strain ATCC 27890 / DSM 864 / NBRC 100397 / JF-1).